We begin with the raw amino-acid sequence, 330 residues long: Inactive hydroxysteroid dehydrogenase-like protein 1 (330 aa).

Ala2 carries the post-translational modification N-acetylalanine. Residues 2 to 82 form a required for mitochondria translocation region; that stretch reads AAVDSFYLLY…SGATDGIGKA (81 aa). NADP(+) contacts are provided by residues 74 to 80, Asp125, and Lys222; that span reads GATDGIG.

It belongs to the short-chain dehydrogenases/reductases (SDR) family. 17-beta-HSD 3 subfamily. In terms of assembly, interacts with STYXL1.

The protein resides in the mitochondrion. The sequence is that of Inactive hydroxysteroid dehydrogenase-like protein 1 (Hsdl1) from Rattus norvegicus (Rat).